A 348-amino-acid polypeptide reads, in one-letter code: MRLGLLSVALLFVGSSHLYSDHYSPSGRHRLGPSPEPAASSQQAEAVRKRLRRRREGGAHAEDCGTAPLKDVLQGSRIIGGTEAQAGAWPWVVSLQIKYGRVLVHVCGGTLVRERWVLTAAHCTKDASDPLMWTAVIGTNNIHGRYPHTKKIKIKAIIIHPNFILESYVNDIALFHLKKAVRYNDYIQPICLPFDVFQILDGNTKCFISGWGRTKEEGNATNILQDAEVHYISREMCNSERSYGGIIPNTSFCAGDEDGAFDTCRGDSGGPLMCYLPEYKRFFVMGITSYGHGCGRRGFPGVYIGPSFYQKWLTEHFFHASTQGILTINILRGQILIALCFVILLATT.

The N-terminal stretch at 1 to 20 (MRLGLLSVALLFVGSSHLYS) is a signal peptide. The Extracellular segment spans residues 21-324 (DHYSPSGRHR…EHFFHASTQG (304 aa)). Residues 24 to 46 (SPSGRHRLGPSPEPAASSQQAEA) are disordered. One can recognise a Peptidase S1 domain in the interval 78–318 (IIGGTEAQAG…YQKWLTEHFF (241 aa)). C107 and C123 are disulfide-bonded. Active-site charge relay system residues include H122 and D171. 3 disulfide bridges follow: C206/C274, C237/C253, and C264/C294. Residues N219 and N249 are each glycosylated (N-linked (GlcNAc...) asparagine). Residue S268 is the Charge relay system of the active site. Residues 325–345 (ILTINILRGQILIALCFVILL) form a helical membrane-spanning segment. The Cytoplasmic portion of the chain corresponds to 346–348 (ATT).

The protein belongs to the peptidase S1 family. In testis, expressed in spermatocytes and spermatids (at protein level).

Its subcellular location is the cell membrane. The protein resides in the cytoplasmic vesicle. It is found in the secretory vesicle. The protein localises to the acrosome. Functionally, required for male fertility. Plays a critical role in sperm capacitation and acrosome reactions during fertilization, and also plays a role in the regulation of proteins involved in spermatogenesis. Regulates protein pathways that promote chromosomal synapsis formation, double-strand break repair, formation of the inner mitochondrial membrane cristae and apoptosis in developing sperm. Required for normal sperm motility and binding to the zona pellucida, potentially via a role in ADAM3 protein maturation. The protein is Transmembrane protease serine 12 of Homo sapiens (Human).